The chain runs to 276 residues: uncharacterized protein (276 aa).

A run of 7 helical transmembrane segments spans residues 5–25, 32–52, 64–84, 104–124, 149–169, 193–213, and 244–264; these read TDLI…GMLA, PLVG…GFVG, GVIL…LLAV, AGLA…GLAL, IAVG…VLLP, LWVT…VMLV, and VGIA…GAFF.

This sequence belongs to the monovalent cation:proton antiporter 2 (CPA2) transporter (TC 2.A.37) family.

It is found in the cell membrane. This is an uncharacterized protein from Methylorubrum extorquens (Methylobacterium dichloromethanicum).